The chain runs to 46 residues: Major cold shock protein (46 aa).

A CSD domain is found at 1-46 (DKGFGFITPADGSKDVFVHFSAIQSNDFKTLDEGQKVEFSIENGAK).

Homodimer.

It localises to the cytoplasm. The chain is Major cold shock protein (cspA) from Yersinia enterocolitica.